The sequence spans 355 residues: Probable F-box protein At5g36000 (355 aa).

Basic and acidic residues predominate over residues 1–14; sequence MNTRSGDAEGDIRG. Positions 1-44 are disordered; sequence MNTRSGDAEGDIRGKMIAPVRDGNGGQKRKLVQSNDIQRDEDGG. The F-box; degenerate domain occupies 78-124; the sequence is QSRFSWYEQDIWTYITRFLDGKSLVKLGATNKWFYKIAMEDTVWRFA.

The protein is Probable F-box protein At5g36000 of Arabidopsis thaliana (Mouse-ear cress).